Here is a 1758-residue protein sequence, read N- to C-terminus: RanBP2-like and GRIP domain-containing protein 3 (1758 aa).

Phosphoserine is present on S21. The stretch at 60 to 93 is one TPR 1 repeat; that stretch reads PRAHRFLGLLYELEENTEKAVECYRRSVELNPTQ. A coiled-coil region spans residues 176–229; that stretch reads RSTKRLKDAVARCHEAERNIALRSSLEWNSCVVQTLKEYLESLQCLESDKSDWR. One copy of the TPR 2 repeat lies at 584–617; the sequence is QKMGSGLNSFYDQREYIGRSVHYWKKVLPLLKII. Residues 761–805 form a disordered region; sequence GPLYKNGSLRNADSEIKHSTPSPTKYSLSPSKSYKYSPKTPPRWA. The span at 779 to 798 shows a compositional bias: low complexity; that stretch reads STPSPTKYSLSPSKSYKYSP. Residues 805–837 are a coiled coil; that stretch reads AEDQNSLLKMIRQEVKAIKEEMQELKLNSSKSA. Residues 1037-1173 form the RanBD1 1 domain; it reads HFEPVVQMPE…FEECQRLLLD (137 aa). Disordered stretches follow at residues 1216–1248, 1307–1335, and 1581–1622; these read VAEE…PTLE, AKLN…GQYF, and NNSE…KNLS. The segment covering 1236–1245 has biased composition (polar residues); the sequence is IKPNAENTGP. Positions 1318–1330 are enriched in acidic residues; sequence TDEESDVTQEEER. The 137-residue stretch at 1334–1470 folds into the RanBD1 2 domain; that stretch reads YFEPVVPLPD…FDEAKTAQEK (137 aa). The segment covering 1581-1594 has biased composition (polar residues); that stretch reads NNSETSSVAQSGSE. The span at 1595–1618 shows a compositional bias: basic and acidic residues; the sequence is SKVEPKKCELSKNSDIEQSSDSKV. The GRIP domain occupies 1703 to 1753; that stretch reads QEVSAANVEHLKNVLLQFIFLKPGSERERLLPVINTMLQLSLEEKGKLAAV.

This chain is RanBP2-like and GRIP domain-containing protein 3 (RGPD3), found in Homo sapiens (Human).